Consider the following 67-residue polypeptide: Alpha-conotoxin-like Pu1.1 (67 aa).

Positions 1–21 are cleaved as a signal peptide; it reads MGMRMMFTVFLLVVLATTVVS. The propeptide occupies 22–46; it reads FTSDRTSDGRNAAFNAFDLIALTAR. Q47 is subject to Pyrrolidone carboxylic acid. 2 cysteine pairs are disulfide-bonded: C49–C55 and C50–C63. A lacks the Ser-Xaa-Pro motif that is crucial for potent interaction with nAChR region spans residues 51–53; that stretch reads NVP. A Cysteine amide modification is found at C63.

The protein belongs to the conotoxin A superfamily. Expressed by the venom duct.

It localises to the secreted. In terms of biological role, alpha-conotoxins act on postsynaptic membranes, they bind to the nicotinic acetylcholine receptors (nAChR) and thus inhibit them. Has possibly a distinct nAChR binding mode from other alpha-conotoxins, due to a different three residue motif (lacks the Ser-Xaa-Pro motif). This Conus pulicarius (Flea-bitten cone) protein is Alpha-conotoxin-like Pu1.1.